Here is an 890-residue protein sequence, read N- to C-terminus: tRNase Z TRZ3, mitochondrial (890 aa).

The N-terminal 44 residues, 1–44 (MINSMPYLHKNLRLLRLLSSKSSPFPLSLRPFSPRSFSLSTLFS), are a transit peptide targeting the mitochondrion. Residues 46–67 (SSSSSSMENNEATNGSKSSSNS) form a disordered region.

Belongs to the RNase Z family. In terms of assembly, homodimer. It depends on Zn(2+) as a cofactor. Requires Ca(2+) as cofactor. Mn(2+) is required as a cofactor. The cofactor is Mg(2+).

The protein resides in the mitochondrion. It is found in the nucleus. The catalysed reaction is Endonucleolytic cleavage of RNA, removing extra 3' nucleotides from tRNA precursor, generating 3' termini of tRNAs. A 3'-hydroxy group is left at the tRNA terminus and a 5'-phosphoryl group is left at the trailer molecule.. Functionally, zinc phosphodiesterase, which displays tRNA 3'-processing endonuclease activity. Involved in tRNA maturation, by removing a 3'-trailer from precursor tRNA. Can process the mitochondrial tRNA-like structures (t-elements). Involved in the processing of small nucleolar RNAs (snoRNAs). The polypeptide is tRNase Z TRZ3, mitochondrial (Arabidopsis thaliana (Mouse-ear cress)).